A 432-amino-acid chain; its full sequence is Cyclic 2,3-diphosphoglycerate synthetase (432 aa).

Belongs to the cyclic 2,3-diphosphoglycerate synthetase family.

It is found in the cytoplasm. The catalysed reaction is (2R)-2,3-bisphosphoglycerate + ATP + H(+) = cyclic (2R)-2,3-bisphosphoglycerate + ADP + phosphate. Functionally, catalyzes the formation of cyclic 2,3-diphosphoglycerate (cDPG) by formation of an intramolecular phosphoanhydride bond at the expense of ATP. This Thermococcus kodakarensis (strain ATCC BAA-918 / JCM 12380 / KOD1) (Pyrococcus kodakaraensis (strain KOD1)) protein is Cyclic 2,3-diphosphoglycerate synthetase.